Here is a 267-residue protein sequence, read N- to C-terminus: Regulatory protein RecX (267 aa).

The protein belongs to the RecX family.

It localises to the cytoplasm. Modulates RecA activity. This chain is Regulatory protein RecX, found in Staphylococcus epidermidis (strain ATCC 12228 / FDA PCI 1200).